We begin with the raw amino-acid sequence, 116 residues long: NADH-ubiquinone oxidoreductase chain 3 (116 aa).

Helical transmembrane passes span V8–L28, F56–L76, and I87–W107.

This sequence belongs to the complex I subunit 3 family.

It is found in the mitochondrion membrane. It carries out the reaction a ubiquinone + NADH + 5 H(+)(in) = a ubiquinol + NAD(+) + 4 H(+)(out). Its function is as follows. Core subunit of the mitochondrial membrane respiratory chain NADH dehydrogenase (Complex I) that is believed to belong to the minimal assembly required for catalysis. Complex I functions in the transfer of electrons from NADH to the respiratory chain. The immediate electron acceptor for the enzyme is believed to be ubiquinone. The protein is NADH-ubiquinone oxidoreductase chain 3 (MT-ND3) of Squalus acanthias (Spiny dogfish).